A 905-amino-acid polypeptide reads, in one-letter code: MKTPTAAEIRELFQRYFEEHGHRRVASSSLVPQNDPTLLFTNAGMVQFKDVFTGRERRDYSRATTAQKCVRAGGKHNDLENVGFTARHHTFFEMMGNFSFGDYFKADAIAWAWELVTSPAWLGIAKDRLAATVFAGEGTLPWDEEAFELWKAQGVPVERIHKLGAKDNFWAMGDTGPCGPCSELHYFQGNDVPCAEEQAGRKCQGVACDCDRWLEIWNLVFMQFERGQDGGLTPLPKPSIDTGAGLERLAAVAQGKRSNYDTDLFRSIIHAVEGLSDKRYDAASDDGVSMRVIADHARATTFLVGDGVLPSNEGRGYVLRRIMRRAIRHGKRLGLERPFLAAVCGAVIDEMGAAYPETRENRAFIEKVAQQEEESFRRTLDKGLAILEGEMRKLVPDATHDGKPATPAPDRARPIIDGKVAFQLYDTFGFPLDLTRVIAAERGFDVDEQGFDRHMAEQRARSEWKGSGEQGVDDLHKQIAGELGEVKFLGYELPAARAQVKAILANGARVARAGKGDKVEIVTDATPFYGESGGQVGDVGHITGAGLEIRVDDAQRPVPGLVTHVGEVLRGEVAVGDAVELSVDDRRRDLVRANHSATHLLQLALREVLGEHVKQAGSVVAPDYLRFDFSHFQPVTEEELAAVERRVNELVRENAETETAVLKLEEARHAGAMMIFGEKYGDVVRVVRIGPSKELCGGTHVRRSGDIAFFKIGSEESIASGVRRLVAYTGARAVEVQQREAEELRRAAALLKAGALEVSQKIEQTQRRVKDLERALEEARSKAAAAQSGDLAALAKDVGGAKVLAARVEGDGKALRELADKLRDRLGKGVVALGAEQDGKAILLVAVTRDLTARLKAGDLVKEAAKLVGGSGGGKPDMAQAGGSDPAGLEKALEKVAELAARALA.

4 residues coordinate Zn(2+): His-595, His-599, Cys-696, and His-700.

The protein belongs to the class-II aminoacyl-tRNA synthetase family. It depends on Zn(2+) as a cofactor.

The protein localises to the cytoplasm. It carries out the reaction tRNA(Ala) + L-alanine + ATP = L-alanyl-tRNA(Ala) + AMP + diphosphate. Its function is as follows. Catalyzes the attachment of alanine to tRNA(Ala) in a two-step reaction: alanine is first activated by ATP to form Ala-AMP and then transferred to the acceptor end of tRNA(Ala). Also edits incorrectly charged Ser-tRNA(Ala) and Gly-tRNA(Ala) via its editing domain. The sequence is that of Alanine--tRNA ligase from Anaeromyxobacter dehalogenans (strain 2CP-C).